The chain runs to 316 residues: Beta-ketoacyl-[acyl-carrier-protein] synthase III (316 aa).

Active-site residues include cysteine 112 and histidine 243. Residues 244-248 (QANLR) form an ACP-binding region. Asparagine 273 is an active-site residue.

Belongs to the thiolase-like superfamily. FabH family. As to quaternary structure, homodimer.

The protein resides in the cytoplasm. It catalyses the reaction malonyl-[ACP] + acetyl-CoA + H(+) = 3-oxobutanoyl-[ACP] + CO2 + CoA. Its pathway is lipid metabolism; fatty acid biosynthesis. Functionally, catalyzes the condensation reaction of fatty acid synthesis by the addition to an acyl acceptor of two carbons from malonyl-ACP. Catalyzes the first condensation reaction which initiates fatty acid synthesis and may therefore play a role in governing the total rate of fatty acid production. Possesses both acetoacetyl-ACP synthase and acetyl transacylase activities. Its substrate specificity determines the biosynthesis of branched-chain and/or straight-chain of fatty acids. The chain is Beta-ketoacyl-[acyl-carrier-protein] synthase III from Histophilus somni (strain 2336) (Haemophilus somnus).